Consider the following 163-residue polypeptide: Putative ribose 5-phosphate isomerase (163 aa).

Position 16 to 17 (16 to 17 (DD)) interacts with D-ribulose 5-phosphate. Cys76 (proton acceptor) is an active-site residue. D-ribulose 5-phosphate-binding positions include 77 to 81 (GTGLG), Asn110, Arg120, and Lys148.

This sequence belongs to the LacAB/RpiB family. As to quaternary structure, homodimer or homotetramer.

This Coccidioides immitis (strain RS) (Valley fever fungus) protein is Putative ribose 5-phosphate isomerase.